A 206-amino-acid chain; its full sequence is Large ribosomal subunit protein uL4 (206 aa).

This sequence belongs to the universal ribosomal protein uL4 family. Part of the 50S ribosomal subunit.

Its function is as follows. One of the primary rRNA binding proteins, this protein initially binds near the 5'-end of the 23S rRNA. It is important during the early stages of 50S assembly. It makes multiple contacts with different domains of the 23S rRNA in the assembled 50S subunit and ribosome. In terms of biological role, forms part of the polypeptide exit tunnel. The polypeptide is Large ribosomal subunit protein uL4 (Rhodopseudomonas palustris (strain ATCC BAA-98 / CGA009)).